Here is a 327-residue protein sequence, read N- to C-terminus: uncharacterized protein (327 aa).

The 68-residue stretch at 12–79 folds into the S4 RNA-binding domain; sequence KRIDEFLAKE…LKKELDLEIE (68 aa). D136 is an active-site residue.

This sequence belongs to the pseudouridine synthase RluA family.

The catalysed reaction is a uridine in RNA = a pseudouridine in RNA. This is an uncharacterized protein from Helicobacter pylori (strain J99 / ATCC 700824) (Campylobacter pylori J99).